The primary structure comprises 252 residues: Hydroxyacylglutathione hydrolase (252 aa).

Residues histidine 54, histidine 56, aspartate 58, histidine 59, histidine 111, aspartate 128, and histidine 166 each contribute to the Zn(2+) site.

The protein belongs to the metallo-beta-lactamase superfamily. Glyoxalase II family. Monomer. Zn(2+) serves as cofactor.

The catalysed reaction is an S-(2-hydroxyacyl)glutathione + H2O = a 2-hydroxy carboxylate + glutathione + H(+). It participates in secondary metabolite metabolism; methylglyoxal degradation; (R)-lactate from methylglyoxal: step 2/2. In terms of biological role, thiolesterase that catalyzes the hydrolysis of S-D-lactoyl-glutathione to form glutathione and D-lactic acid. In Vibrio parahaemolyticus serotype O3:K6 (strain RIMD 2210633), this protein is Hydroxyacylglutathione hydrolase.